The sequence spans 414 residues: MAVAPPSYCFVAFPPRAKDGLVVFGKNSARPRDEVQEVVYFSAADHEPESKVECTYISINQVPRTHAIVISRPAWLWGAEMGANEHGVCIANEAINAREPAAETEALLGMDLVRLGLERGATAKEALDVIVALLEEHGQGGNYYEDANSCHSFQSAFLIVDREEAWVLETVGKYWAAEKITEGVKCICNQLSLTTKIDAEHPELRSYAQSQGWWMGEDEFNFSEVFSPADDHLTCCSGRDTLEKQEESITVQTMIDVLRDKASGVCVDSESFLTTASVVSVLPQNGSSPCIHYFTGTPDPSRSIFKPFIFVDDVKLVPKAQSPCFGDDDPAKKEPRFQEKPDRRHELYKAHEWARAVLESDEEQGQKLRKTMLELEKQGLEAMEEILTSSDPLDPTEVGDLFYDCVDTEIKFFK.

At Ala2 the chain carries N-acetylalanine. Residue Cys9 is part of the active site.

This sequence belongs to the peptidase C69 family. Secernin subfamily.

The protein resides in the cytoplasm. Functionally, regulates exocytosis in mast cells. Increases both the extent of secretion and the sensitivity of mast cells to stimulation with calcium. The sequence is that of Secernin-1 (SCRN1) from Bos taurus (Bovine).